Reading from the N-terminus, the 172-residue chain is S-ribosylhomocysteine lyase (172 aa).

3 residues coordinate Fe cation: His54, His58, and Cys128.

Belongs to the LuxS family. Homodimer. It depends on Fe cation as a cofactor.

The enzyme catalyses S-(5-deoxy-D-ribos-5-yl)-L-homocysteine = (S)-4,5-dihydroxypentane-2,3-dione + L-homocysteine. Involved in the synthesis of autoinducer 2 (AI-2) which is secreted by bacteria and is used to communicate both the cell density and the metabolic potential of the environment. The regulation of gene expression in response to changes in cell density is called quorum sensing. Catalyzes the transformation of S-ribosylhomocysteine (RHC) to homocysteine (HC) and 4,5-dihydroxy-2,3-pentadione (DPD). The sequence is that of S-ribosylhomocysteine lyase from Vibrio alginolyticus.